The chain runs to 613 residues: MVKNLIFWLVITVVLMSVFQNFNSSDTSNHRVDYSTFLSEVNQDQVREAYINGRIISVTKKDSSKYITYIPINDPKLLDNLLTKNVKIVGEIPEEPSLLISIFISWFPMLLLIGVWIFFMRQMQMGGGKGAMSFGKSKARMLSEDQIQTTFADVAGCDEAKEEVSELVEYLKEPSRFQKLGGKIPKGILMVGPPGTGKTLLAKAIAGEAKVPFFTISGSDFVEMFVGVGASRVRDMFEHARKSAPCIIFIDEIDAVGRQRGAGLGGGHDEREQTLNQMLVEMDGFDGNEGVILIAATNRPDVLDPALLRPGRFDRQVIVALPDVRGRKQILKVHMRKVPLSEDVDPMIIARGTPGFSGADLANLVNEAALFAARFNNRVVSMIHFEKAKDKIMMGSERRSMVMSDFQKESTAYHEAGHVIIGRLVPDHDPAHKVTIIPRGQALGITFFLPESDILSISRQKLESQISTLYGGRLAEEIIYGSQNVSTGAFNDIKVATNLARNMVTQWGFSDKLGPLLYAEEEGEVFLGRSVAKAKHMSDETARIIDEEVKLLIEVNYNRARKILNENLDILHAMKDALIKYETIDSLQIDDLMERREVRKPKGWLEVDQKKDI.

Topologically, residues 1–4 (MVKN) are cytoplasmic. The chain crosses the membrane as a helical span at residues 5–25 (LIFWLVITVVLMSVFQNFNSS). The Extracellular segment spans residues 26–98 (DTSNHRVDYS…VGEIPEEPSL (73 aa)). The chain crosses the membrane as a helical span at residues 99–119 (LISIFISWFPMLLLIGVWIFF). Over 120–613 (MRQMQMGGGK…WLEVDQKKDI (494 aa)) the chain is Cytoplasmic. 192 to 199 (GPPGTGKT) serves as a coordination point for ATP. His-414 lines the Zn(2+) pocket. Glu-415 is an active-site residue. Zn(2+)-binding residues include His-418 and Asp-492.

This sequence in the central section; belongs to the AAA ATPase family. The protein in the C-terminal section; belongs to the peptidase M41 family. Homohexamer. Zn(2+) serves as cofactor.

The protein localises to the cell membrane. Functionally, acts as a processive, ATP-dependent zinc metallopeptidase for both cytoplasmic and membrane proteins. Plays a role in the quality control of integral membrane proteins. The protein is ATP-dependent zinc metalloprotease FtsH of Buchnera aphidicola subsp. Schizaphis graminum (strain Sg).